The chain runs to 96 residues: Glutamyl-tRNA(Gln) amidotransferase subunit C (96 aa).

Belongs to the GatC family. Heterotrimer of A, B and C subunits.

It catalyses the reaction L-glutamyl-tRNA(Gln) + L-glutamine + ATP + H2O = L-glutaminyl-tRNA(Gln) + L-glutamate + ADP + phosphate + H(+). It carries out the reaction L-aspartyl-tRNA(Asn) + L-glutamine + ATP + H2O = L-asparaginyl-tRNA(Asn) + L-glutamate + ADP + phosphate + 2 H(+). Allows the formation of correctly charged Asn-tRNA(Asn) or Gln-tRNA(Gln) through the transamidation of misacylated Asp-tRNA(Asn) or Glu-tRNA(Gln) in organisms which lack either or both of asparaginyl-tRNA or glutaminyl-tRNA synthetases. The reaction takes place in the presence of glutamine and ATP through an activated phospho-Asp-tRNA(Asn) or phospho-Glu-tRNA(Gln). This Nostoc sp. (strain PCC 7120 / SAG 25.82 / UTEX 2576) protein is Glutamyl-tRNA(Gln) amidotransferase subunit C.